The following is a 286-amino-acid chain: Octanoyltransferase (286 aa).

The BPL/LPL catalytic domain maps to 50–278 (LRTPDELWIV…NIAQRHAGVI (229 aa)). Residues 89 to 96 (RGGQVTWH), 190 to 192 (SLG), and 203 to 205 (GVA) each bind substrate. Catalysis depends on C221, which acts as the Acyl-thioester intermediate.

Belongs to the LipB family.

It localises to the cytoplasm. The enzyme catalyses octanoyl-[ACP] + L-lysyl-[protein] = N(6)-octanoyl-L-lysyl-[protein] + holo-[ACP] + H(+). Its pathway is protein modification; protein lipoylation via endogenous pathway; protein N(6)-(lipoyl)lysine from octanoyl-[acyl-carrier-protein]: step 1/2. Catalyzes the transfer of endogenously produced octanoic acid from octanoyl-acyl-carrier-protein onto the lipoyl domains of lipoate-dependent enzymes. Lipoyl-ACP can also act as a substrate although octanoyl-ACP is likely to be the physiological substrate. This chain is Octanoyltransferase, found in Psychrobacter arcticus (strain DSM 17307 / VKM B-2377 / 273-4).